Here is a 341-residue protein sequence, read N- to C-terminus: Mitochondrial transcription factor 1 (341 aa).

S-adenosyl-L-methionine contacts are provided by leucine 23, glutamate 77, aspartate 101, and asparagine 137.

It belongs to the class I-like SAM-binding methyltransferase superfamily. rRNA adenine N(6)-methyltransferase family.

It is found in the mitochondrion intermembrane space. Mitochondrial transcription factor that confers selective promoter recognition on the core subunit of the yeast mitochondrial RNA polymerase. Interacts with DNA in a non-specific manner. This is Mitochondrial transcription factor 1 (MTF1) from Saccharomyces cerevisiae (strain ATCC 204508 / S288c) (Baker's yeast).